Reading from the N-terminus, the 426-residue chain is MSNLTPIATYNLALQPFQPVPAIEDDFPISIRITLASLDPEAADDKAEPSSLRILKKSNSLLSDDYFEDDDDDEEEDDEEDELDDEEEEEEAEEEKSSKKSNGKKSSKKDEDEEEDDEEEDDEDNDEDDVSEYIVCTLSPKHQYQQTLDLTITPDEEVYFVVTGSYPIHLTGNYIEHPADQDEEDYDNEDEDYDDEYDLSPDEDEIIYGAPLDDEYDDEEESEEEGTPKIEEIVEEKEKVKESPKESKKRVAEESTSKKSKKAKKDEKKSVQFSKELEQGPTGSTLVEKDNKKATPTKDKKETPVKDDGDKKKKFPTKTLLGGVITEDRKIGSGATAKSGAKVGIRYIGKLKNGKVFDKNTSGKPFSFKLGKGECIKGFDLGVTGMAVGGERRVIIPPKMGYGSQALPGIPANSELTFDIKLVSLK.

2 disordered regions span residues Ser37–Gln143 and Thr171–Lys314. 3 stretches are compositionally biased toward acidic residues: residues Asp65–Glu94, Glu111–Ser131, and Gln181–Glu225. Composition is skewed to basic and acidic residues over residues Gly226–Ser257, Lys264–Glu278, and Val287–Lys311. The 87-residue stretch at Gly340 to Lys426 folds into the PPIase FKBP-type domain.

Belongs to the FKBP-type PPIase family. FKBP3/4 subfamily.

It is found in the nucleus. Its subcellular location is the nucleolus. The enzyme catalyses [protein]-peptidylproline (omega=180) = [protein]-peptidylproline (omega=0). With respect to regulation, inhibited by both FK506 and rapamycin. Functionally, PPIases accelerate the folding of proteins. It catalyzes the cis-trans isomerization of proline imidic peptide bonds in oligopeptides. This is FK506-binding protein 3 (FPR3) from Candida albicans (strain SC5314 / ATCC MYA-2876) (Yeast).